Reading from the N-terminus, the 61-residue chain is Temporin-CG3 (61 aa).

The signal sequence occupies residues methionine 1 to cysteine 22. The propeptide at glutamate 23 to glutamate 44 is removed in mature form.

The protein belongs to the frog skin active peptide (FSAP) family. Temporin subfamily. Expressed by the skin glands.

The protein localises to the secreted. In terms of biological role, antimicrobial peptide active against a variety of Gram-positive bacterial strains but not against Gram-negative bacteria. Has weak antifungal activity against a slime mold isolate. Has weak hemolytic activity against human erythrocytes. This is Temporin-CG3 from Amolops chunganensis (Chungan torrent frog).